Consider the following 656-residue polypeptide: Methylenetetrahydrofolate reductase (NADPH) (656 aa).

The tract at residues 1 to 46 is disordered; it reads MVNEARGNDSLNPCLEGSASSSSESSKDSSRCSTPGLDPERHERLR. Phosphoserine is present on residues Ser-10, Ser-18, Ser-20, Ser-21, Ser-23, Ser-25, Ser-26, Ser-29, and Ser-30. At Thr-34 the chain carries Phosphothreonine. Glu-63 functions as the Proton donor/acceptor in the catalytic mechanism. NAD(+) contacts are provided by residues 63-68 and 94-95; these read EFFPPR and TW. Thr-94 carries the post-translational modification Phosphothreonine. 94 to 95 is an FAD binding site; sequence TW. Phosphoserine is present on Ser-103. FAD is bound by residues His-127, 157–159, 174–175, Tyr-197, 201–204, Asp-210, and Lys-217; these read RGD, YA, and HPEA. Asp-159 provides a ligand contact to substrate. 3 residues coordinate substrate: Gln-228, Tyr-321, and Arg-325. Ser-394 is subject to Phosphoserine. Thr-451 is modified (phosphothreonine). Residues Asn-456, 461 to 464, 481 to 485, Thr-560, and Thr-573 contribute to the S-adenosyl-L-methionine site; these read AAET and TINSQ.

This sequence belongs to the methylenetetrahydrofolate reductase family. In terms of assembly, homodimer. FAD serves as cofactor. In terms of processing, phosphorylation of an N-terminal serine-rich phosphorylation region increases sensitivity to S-adenosylmethionine and inhibition.

It carries out the reaction (6S)-5-methyl-5,6,7,8-tetrahydrofolate + NADP(+) = (6R)-5,10-methylene-5,6,7,8-tetrahydrofolate + NADPH + H(+). The protein operates within one-carbon metabolism; tetrahydrofolate interconversion. Its activity is regulated as follows. Allosterically regulated by S-adenosylmethionine (SAM). In terms of biological role, catalyzes the conversion of 5,10-methylenetetrahydrofolate to 5-methyltetrahydrofolate, a cosubstrate for homocysteine remethylation to methionine. Represents a key regulatory connection between the folate and methionine cycles. This is Methylenetetrahydrofolate reductase (NADPH) (MTHFR) from Macaca fascicularis (Crab-eating macaque).